The sequence spans 273 residues: Shikimate dehydrogenase (NADP(+)) (273 aa).

Shikimate contacts are provided by residues 15–17 (SLS) and Thr-62. The active-site Proton acceptor is Lys-66. Glu-78 is a binding site for NADP(+). 2 residues coordinate shikimate: Asn-87 and Asp-102. Residues 126-130 (GAGGA), 149-154 (NRTPER), Ile-215, and Gly-238 contribute to the NADP(+) site.

This sequence belongs to the shikimate dehydrogenase family. Homodimer.

It catalyses the reaction shikimate + NADP(+) = 3-dehydroshikimate + NADPH + H(+). The protein operates within metabolic intermediate biosynthesis; chorismate biosynthesis; chorismate from D-erythrose 4-phosphate and phosphoenolpyruvate: step 4/7. Its function is as follows. Involved in the biosynthesis of the chorismate, which leads to the biosynthesis of aromatic amino acids. Catalyzes the reversible NADPH linked reduction of 3-dehydroshikimate (DHSA) to yield shikimate (SA). This chain is Shikimate dehydrogenase (NADP(+)), found in Desulfitobacterium hafniense (strain Y51).